We begin with the raw amino-acid sequence, 894 residues long: Alpha-actinin-2 (894 aa).

The tract at residues 1-254 (MNQIEPGVQY…IMTYVSCFYH (254 aa)) is actin-binding. 2 Calponin-homology (CH) domains span residues 38-142 (KQQR…LRFA) and 151-257 (TSAK…HAFA). Thr237 carries the phosphothreonine modification. 4 Spectrin repeats span residues 281–391 (RLME…WLLN), 401–506 (HLAE…ALER), 516–627 (QLHL…SLQE), and 637–740 (RLRR…EVET). 2 EF-hand domains span residues 753 to 788 (EQMN…MGYD) and 789 to 824 (LGEA…ETAD). 6 residues coordinate Ca(2+): Asp766, Asn770, Asp777, Asp802, Asn804, and Thr808.

This sequence belongs to the alpha-actinin family. Homodimer; antiparallel. Also forms heterodimers with ACTN3. Interacts with ADAM12, MYOZ1, MYOZ2 and MYOZ3. Interacts via its C-terminal region with the LDB3 PDZ domain. Interacts with XIRP2. Interacts with DST (via N-terminus). Interacts with PARVB. Interacts with SYNPO2. Post-translationally, ubiquitinated by FBXL22, leading to proteasomal degradation.

Its subcellular location is the cytoplasm. It localises to the myofibril. It is found in the sarcomere. The protein resides in the z line. F-actin cross-linking protein which is thought to anchor actin to a variety of intracellular structures. This is a bundling protein. In Bos taurus (Bovine), this protein is Alpha-actinin-2 (ACTN2).